Consider the following 553-residue polypeptide: Efflux pump alnA (553 aa).

Residues 1-21 (MSSDDTVKQEHSCSADSEKQD) show a composition bias toward basic and acidic residues. Positions 1–36 (MSSDDTVKQEHSCSADSEKQDSSCASDNEQPKEPQS) are disordered. Transmembrane regions (helical) follow at residues 40–60 (IHGLLWVVTILAIYSSTFLFA), 85–105 (WSGVAFVMASSATVLTWLQIF), 110–130 (IKWMYIFSIAVFMGGSAICGA), 136–156 (MLIGGRVICGIGGVGQYVGVM), 174–194 (AMGLTWGAGTVLGPIIGGAFT), 202–222 (WSFYINLVVGGLFAPVYIFLL), 243–263 (LVGTLILFAAFAAGVIGINFA), 270–290 (SEPGIIVAITLGGVLFIVFGI), 319–339 (LLFVCGCCTGVCVTVPTYVIP), 355–375 (VRLLPFVCLLVFSCVSGGYLA), 382–402 (IPWYIMGGGFCLIGSALMYTI), 413–433 (GYSSLIGLGSGMYLQLGHAVA), and 522–542 (TYILCIVAAAVTLLATLGMKW).

It belongs to the major facilitator superfamily. TCR/Tet family.

It is found in the cell membrane. Its function is as follows. Efflux pump; part of the gene cluster that mediates the biosynthesis of asperlin, a polyketide showing anti-inflammatory, antitumor and antibiotic activities. Is probably involved in the efflux of asperlin. In Emericella nidulans (strain FGSC A4 / ATCC 38163 / CBS 112.46 / NRRL 194 / M139) (Aspergillus nidulans), this protein is Efflux pump alnA.